The following is a 239-amino-acid chain: Pyridoxine 5'-phosphate synthase (239 aa).

Asn-7 is a binding site for 3-amino-2-oxopropyl phosphate. Position 9–10 (Asp-9–His-10) interacts with 1-deoxy-D-xylulose 5-phosphate. Residue Arg-18 participates in 3-amino-2-oxopropyl phosphate binding. The active-site Proton acceptor is His-43. 1-deoxy-D-xylulose 5-phosphate contacts are provided by Arg-45 and His-50. Glu-70 acts as the Proton acceptor in catalysis. Thr-100 contacts 1-deoxy-D-xylulose 5-phosphate. His-191 serves as the catalytic Proton donor. Residues Gly-192 and Gly-213–His-214 each bind 3-amino-2-oxopropyl phosphate.

It belongs to the PNP synthase family. As to quaternary structure, homooctamer; tetramer of dimers.

Its subcellular location is the cytoplasm. It carries out the reaction 3-amino-2-oxopropyl phosphate + 1-deoxy-D-xylulose 5-phosphate = pyridoxine 5'-phosphate + phosphate + 2 H2O + H(+). The protein operates within cofactor biosynthesis; pyridoxine 5'-phosphate biosynthesis; pyridoxine 5'-phosphate from D-erythrose 4-phosphate: step 5/5. Its function is as follows. Catalyzes the complicated ring closure reaction between the two acyclic compounds 1-deoxy-D-xylulose-5-phosphate (DXP) and 3-amino-2-oxopropyl phosphate (1-amino-acetone-3-phosphate or AAP) to form pyridoxine 5'-phosphate (PNP) and inorganic phosphate. In Trichlorobacter lovleyi (strain ATCC BAA-1151 / DSM 17278 / SZ) (Geobacter lovleyi), this protein is Pyridoxine 5'-phosphate synthase.